The following is a 370-amino-acid chain: Metallophosphoesterase 1 homolog (370 aa).

A helical membrane pass occupies residues 7 to 27 (CFVIVLCALIFCEYVADFVVL). A divalent metal cation-binding residues include Asp-52, Asp-94, Asn-132, His-225, His-275, and His-277. Residues 328–348 (FVFNSYLSAGILCLIVIGFQL) traverse the membrane as a helical segment.

The protein belongs to the metallophosphoesterase superfamily. MPPE1 family. Requires Mn(2+) as cofactor.

The protein localises to the membrane. Metallophosphoesterase. This is Metallophosphoesterase 1 homolog (PGAP5) from Drosophila melanogaster (Fruit fly).